Here is a 1064-residue protein sequence, read N- to C-terminus: Ribosome quality control complex subunit NEMF (1064 aa).

A Phosphothreonine modification is found at threonine 7. The stretch at 296–359 (VDEFYSKIEG…LIEMNLQIVD (64 aa)) forms a coiled coil. Serine 417 carries the post-translational modification Phosphoserine. The disordered stretch occupies residues 420–451 (EDGDGDASIENSDAEAPKGKKKKQKNKQLQKP). Residues 438 to 447 (GKKKKQKNKQ) are compositionally biased toward basic residues. The stretch at 481–512 (AAKKTQRTVEAAEKAFKSAEKKTKQTLKEVQT) forms a coiled coil. A compositionally biased stretch (acidic residues) spans 694–707 (EQLEGGDSSEEETE). Disordered regions lie at residues 694-718 (EQLE…DVEL) and 731-973 (SGRD…SLTG). Positions 731–756 (SGRDELSSEDGEAKAVTKDQEPIGEM) are enriched in basic and acidic residues. Serine 737 bears the Phosphoserine mark. Residues 771–781 (IDLSHLQSQRP) are compositionally biased toward polar residues. Over residues 828–839 (IEEKDKERESAV) the composition is skewed to basic and acidic residues. The stretch at 858 to 882 (KRGQKSKMKKMKEKYKDQDDEDREL) forms a coiled coil. Basic residues predominate over residues 859–870 (RGQKSKMKKMKE). Basic and acidic residues predominate over residues 947–959 (DDPHDDKEEHDLD). Polar residues predominate over residues 960-973 (QQGNEENLFDSLTG).

This sequence belongs to the NEMF family. As to quaternary structure, component of the ribosome quality control complex (RQC), composed of the E3 ubiquitin ligase LTN1, TCF25 and NEMF associated with the 60S ribosomal subunit. The complex probably also contains VCP/p97 and its ubiquitin-binding cofactors. Interacts (via its N-terminus) with XPO1.

Its subcellular location is the cytoplasm. It localises to the cytosol. The protein localises to the nucleus. Key component of the ribosome quality control complex (RQC), a ribosome-associated complex that mediates the extraction of incompletely synthesized nascent chains from stalled ribosomes as well as their ubiquitin-mediated proteasomal degradation. Thereby, frees 60S subunit ribosomes from the stalled translation complex and prevents the accumulation of nascent polypeptide chains that are potentially toxic for the cell. Within the RQC complex, NEMF specifically binds stalled 60S ribosomal subunits by recognizing an exposed, nascent chain-conjugated tRNA moiety and promotes the recruitment of LTN1 to stalled 60S subunits. Following binding to stalled 60S ribosomal subunits, NEMF mediates CAT tailing by recruiting alanine-charged tRNA to the A-site and directing the elongation of stalled nascent chains independently of mRNA or 40S subunits, leading to non-templated C-terminal alanine extensions (CAT tails). Mainly recruits alanine-charged tRNAs, but can also other amino acid-charged tRNAs. CAT tailing is required to promote ubiquitination of stalled nascent chains by different E3 ubiquitin-protein ligases. In the canonical RQC pathway (RQC-L), CAT tailing facilitates LTN1-dependent ubiquitination by exposing lysine residues that would otherwise remain buried in the ribosomal exit tunnel. In the alternative RQC pathway (RQC-C) CAT tailing creates an C-degron mainly composed of alanine that is recognized by the CRL2(KLHDC10) and RCHY1/PIRH2 E3 ligases, leading to ubiquitination and degradation of stalled nascent chains. NEMF may also indirectly play a role in nuclear export. This chain is Ribosome quality control complex subunit NEMF, found in Mus musculus (Mouse).